Here is a 305-residue protein sequence, read N- to C-terminus: Translation initiation factor eIF2B subunit alpha (305 aa).

The protein belongs to the eIF-2B alpha/beta/delta subunits family. Component of the translation initiation factor 2B (eIF2B) complex which is a heterodecamer of two sets of five different subunits: alpha, beta, gamma, delta and epsilon. Subunits alpha, beta and delta comprise a regulatory subcomplex and subunits epsilon and gamma comprise a catalytic subcomplex. Within the complex, the hexameric regulatory complex resides at the center, with the two heterodimeric catalytic subcomplexes bound on opposite sides.

The protein resides in the cytoplasm. Its subcellular location is the cytosol. With respect to regulation, activated by the chemical integrated stress response (ISR) inhibitor ISRIB which stimulates guanine nucleotide exchange factor activity for both phosphorylated and unphosphorylated eIF2. Acts as a component of the translation initiation factor 2B (eIF2B) complex, which catalyzes the exchange of GDP for GTP on eukaryotic initiation factor 2 (eIF2) gamma subunit. Its guanine nucleotide exchange factor activity is repressed when bound to eIF2 complex phosphorylated on the alpha subunit, thereby limiting the amount of methionyl-initiator methionine tRNA available to the ribosome and consequently global translation is repressed. The polypeptide is Translation initiation factor eIF2B subunit alpha (EIF2B1) (Bos taurus (Bovine)).